Consider the following 185-residue polypeptide: Ribosome-recycling factor (185 aa).

A disordered region spans residues 132–152 (RRDANEQLKKMEKDSELTEDD).

This sequence belongs to the RRF family.

It localises to the cytoplasm. In terms of biological role, responsible for the release of ribosomes from messenger RNA at the termination of protein biosynthesis. May increase the efficiency of translation by recycling ribosomes from one round of translation to another. This chain is Ribosome-recycling factor, found in Alkaliphilus metalliredigens (strain QYMF).